The sequence spans 23 residues: NADH-ubiquinone oxidoreductase 29 kDa subunit (23 aa).

In terms of assembly, complex I is composed of about 45 different subunits.

The protein resides in the mitochondrion inner membrane. The catalysed reaction is a ubiquinone + NADH + 5 H(+)(in) = a ubiquinol + NAD(+) + 4 H(+)(out). In terms of biological role, transfer of electrons from NADH to the respiratory chain. The immediate electron acceptor for the enzyme is believed to be ubiquinone. This is NADH-ubiquinone oxidoreductase 29 kDa subunit from Solanum tuberosum (Potato).